The primary structure comprises 1089 residues: MAVFDTPEEAFGVLRPVCVQLTKTQTVENVEHLQTRLQAVSDSALQELQQYILFPLRFTLKTPGPKRERLIQSVVECLTFVLSSTCVKEQELLQELFSELSACLYSPSSQKPAAVSEELKLAVIQGLSTLMHSAYGDIILTFYEPSILPRLGFAVSLLLGLAEQEKSKQIKIAALKCLQVLLLQCDCQDHPRSLDELEQKQLGDLFASFLPGISTALTRLITGDFKQGHSIVVSSLKIFYKTVSFIMADEQLKRISKVQAKPAVEHRVAELMVYREADWVKKTGDKLTILIKKIIECVSVHPHWKVRLELVELVEDLLLKCSQSLVECAGPLLKALVGLVNDESPEIQAQCNKVLRHFADQKVVVGNKALADILSESLHSLATSLPRLMNSQDDQGKFSTLSLLLGYLKLLGPKINFVLNSVAHLQRLSKALIQVLELDVADIKIVEERRWNSDDLNASPKTSATQPWNRIQRRYFRFFTDERIFMLLRQVCQLLGYYGNLYLLVDHFMELYHQSVVYRKQAAMILNELVTGAAGLEVEDLHEKHIKTNPEELREIVTSILEEYTSQENWYLVTCLETEEMGEELMMEHPGLQAITSGEHTCQVTSFLAFSKPSPTICSMNSNIWQICIQLEGIGQFAYALGKDFCLLLMSALYPVLEKAGDQTLLISQVATSTMMDVCRACGYDSLQHLINQNSDYLVNGISLNLRHLALHPHTPKVLEVMLRNSDANLLPLVADVVQDVLATLDQFYDKRAASFVSVLHALMAALAQWFPDTGNLGHLQEQSLGEEGSHLNQRPAALEKSTTTAEDIEQFLLNYLKEKDVADGNVSDFDNEEEEQSVPPKVDENDTRPDVEPPLPLQIQIAMDVMERCIHLLSDKNLQIRLKVLDVLDLCVVVLQSHKNQLLPLAHQAWPSLVHRLTRDAPLAVLRAFKVLRTLGSKCGDFLRSRFCKDVLPKLAGSLVTQAPISARAGPVYSHTLAFKLQLAVLQGLGPLCERLDLGEGDLNKVADACLIYLSVKQPVKLQEAARSVFLHLMKVDPDSTWFLLNELYCPVQFTPPHPSLHPVQLHGASGQQNPYTTNVLQLLKELQ.

Position 459 is a phosphoserine (S459). Positions 826–852 are disordered; the sequence is NVSDFDNEEEEQSVPPKVDENDTRPDV. Residue S828 is modified to Phosphoserine; by CK2. Residues 842–852 are compositionally biased toward basic and acidic residues; sequence KVDENDTRPDV.

The protein belongs to the tti1 family. Component of the TTT complex composed of TELO2, TTI1 and TTI2. Interacts with ATM, ATR, MTOR, PRKDC, RUVBL1, SMG1, TELO2, TRRAP and TTI2. Component of the mTORC1 and mTORC2 complexes. Interacts with WAC; WAC positively regulates MTOR activity by promoting the assembly of the TTT complex and the RUVBL complex composed of RUVBL1 and RUVBL2 into the TTT-RUVBL complex which leads to the dimerization of the mTORC1 complex and its subsequent activation. Phosphorylated at Ser-828 by CK2 following growth factor deprivation, leading to its subsequent ubiquitination by the SCF(FBXO9) complex. Phosphorylation by CK2 only takes place when TELO2 is bound to mTORC1, not mTORC2; leading to selective ubiquitination of mTORC1-associated protein. Post-translationally, ubiquitinated by the SCF(FBXO9) complex following phosphorylation by CK2 in response to growth factor deprivation, leading to its degradation by the proteasome. Only mTORC1-associated protein is ubiquitinated and degraded, leading to selective inactivation of mTORC1 to restrain cell growth and protein translation, while mTORC2 is activated due to the relief of feedback inhibition by mTORC1. Widely expressed.

Its subcellular location is the cytoplasm. Its function is as follows. Regulator of the DNA damage response (DDR). Part of the TTT complex that is required to stabilize protein levels of the phosphatidylinositol 3-kinase-related protein kinase (PIKK) family proteins. The TTT complex is involved in the cellular resistance to DNA damage stresses, like ionizing radiation (IR), ultraviolet (UV) and mitomycin C (MMC). Together with the TTT complex and HSP90 may participate in the proper folding of newly synthesized PIKKs. Promotes assembly, stabilizes and maintains the activity of mTORC1 and mTORC2 complexes, which regulate cell growth and survival in response to nutrient and hormonal signals. This chain is TELO2-interacting protein 1 homolog (TTI1), found in Homo sapiens (Human).